We begin with the raw amino-acid sequence, 533 residues long: MLEEGNNVYEIQDLEKRSPVIGSSLENEKKVAASETFTATSEDDQQYIVESSEATKLSWFHKFFASLNAETKGVEPVTEDEKTDDSILNAASMWFSANMVIASYALGALGPMVFGLNFGQSVLVIIFFNIMGLIFVAFFSVFGAELGLRQMILSRYLVGNVTARIFSLINVIACVGWGIVNTSVSAQLLNMVNEGSGHVCPIWAGCLIIIGGTVLVTFFGYSVIHAYEKWSWVPNFAVFLVIIAQLSRSGKFKGGEWVGGATTAGSVLSFGSSIFGFAAGWTTYAADYTVYMPKSTNKYKIFFSLVAGLAFPLFFTMILGAASAMAALNDPTWKAYYDKNAMGGVIYAILVPNSLNGFGQFCCVLLALSTIANNIPNMYTVALSAQALWAPLAKIPRVVWTMAGNAATLGISIPATYYFDGFMENFMDSIGYYLAIYIAISCSEHFFYRRSFSAYNIDDWDNWEHLPIGIAGTAALIVGAFGVALGMCQTYWVGEIGRLIGKYGGDIGFELGASWAFIIYNILRPLELKYFGR.

Residues 1–98 (MLEEGNNVYE…NAASMWFSAN (98 aa)) lie on the Cytoplasmic side of the membrane. Lys16 participates in a covalent cross-link: Glycyl lysine isopeptide (Lys-Gly) (interchain with G-Cter in ubiquitin). Phosphoserine is present on Ser18. A helical membrane pass occupies residues 99 to 119 (MVIASYALGALGPMVFGLNFG). At 120–121 (QS) the chain is on the extracellular side. The chain crosses the membrane as a helical span at residues 122-141 (VLVIIFFNIMGLIFVAFFSV). Residues 142–198 (FGAELGLRQMILSRYLVGNVTARIFSLINVIACVGWGIVNTSVSAQLLNMVNEGSGH) lie on the Cytoplasmic side of the membrane. The interval 165–184 (IFSLINVIACVGWGIVNTSV) is surface seeking. The helical transmembrane segment at 199-218 (VCPIWAGCLIIIGGTVLVTF) threads the bilayer. The Extracellular portion of the chain corresponds to 219 to 256 (FGYSVIHAYEKWSWVPNFAVFLVIIAQLSRSGKFKGGE). The helical transmembrane segment at 257–276 (WVGGATTAGSVLSFGSSIFG) threads the bilayer. At 277-300 (FAAGWTTYAADYTVYMPKSTNKYK) the chain is on the cytoplasmic side. The helical transmembrane segment at 301 to 320 (IFFSLVAGLAFPLFFTMILG) threads the bilayer. The Extracellular portion of the chain corresponds to 321–347 (AASAMAALNDPTWKAYYDKNAMGGVIY). A helical membrane pass occupies residues 348–367 (AILVPNSLNGFGQFCCVLLA). Residues 368–398 (LSTIANNIPNMYTVALSAQALWAPLAKIPRV) lie on the Cytoplasmic side of the membrane. Residues 399-418 (VWTMAGNAATLGISIPATYY) form a helical membrane-spanning segment. Residues 419-465 (FDGFMENFMDSIGYYLAIYIAISCSEHFFYRRSFSAYNIDDWDNWEH) lie on the Extracellular side of the membrane. Residues 466–485 (LPIGIAGTAALIVGAFGVAL) form a helical membrane-spanning segment. Residues 486-533 (GMCQTYWVGEIGRLIGKYGGDIGFELGASWAFIIYNILRPLELKYFGR) lie on the Cytoplasmic side of the membrane.

The protein belongs to the purine-cytosine permease (2.A.39) family. In terms of processing, not N-glycosylated.

The protein localises to the membrane. Its function is as follows. This permease has a broad specificity towards purines, and also transport cytosine and 5-methylcytosine but neither uracil nor thymine. This Saccharomyces cerevisiae (strain ATCC 204508 / S288c) (Baker's yeast) protein is Purine-cytosine permease FCY2 (FCY2).